Reading from the N-terminus, the 176-residue chain is Large ribosomal subunit protein bL28m (176 aa).

Residues M1–K8 constitute a mitochondrion transit peptide.

This sequence belongs to the bacterial ribosomal protein bL28 family. As to quaternary structure, component of the mitochondrial large ribosomal subunit (mt-LSU). Mature yeast 74S mitochondrial ribosomes consist of a small (37S) and a large (54S) subunit. The 37S small subunit contains a 15S ribosomal RNA (15S mt-rRNA) and at least 32 different proteins. The 54S large subunit contains a 21S rRNA (21S mt-rRNA) and at least 45 different proteins.

Its subcellular location is the cytoplasm. It localises to the mitochondrion. Its function is as follows. Component of the mitochondrial ribosome (mitoribosome), a dedicated translation machinery responsible for the synthesis of mitochondrial genome-encoded proteins, including at least some of the essential transmembrane subunits of the mitochondrial respiratory chain. The mitoribosomes are attached to the mitochondrial inner membrane and translation products are cotranslationally integrated into the membrane. This Schizosaccharomyces pombe (strain 972 / ATCC 24843) (Fission yeast) protein is Large ribosomal subunit protein bL28m (mrpl24).